The sequence spans 401 residues: Decapping and exoribonuclease protein (401 aa).

The segment at 1-27 (MEGNKSMQREKIDRPMKRGPEQNSLSP) is disordered. The span at 7-20 (MQREKIDRPMKRGP) shows a compositional bias: basic and acidic residues. Residues Arg-69, Glu-114, and 149 to 151 (WRG) contribute to the substrate site. Glu-210 lines the Mg(2+) pocket. Cys-235 and Glu-252 together coordinate substrate. Mg(2+) is bound by residues Glu-252, Asp-254, Glu-271, and Leu-272. Residues Lys-273 and Gln-298 each contribute to the substrate site.

Belongs to the DXO/Dom3Z family. Mg(2+) serves as cofactor.

Its subcellular location is the nucleus. It catalyses the reaction a 5'-end triphospho-ribonucleoside in mRNA + H2O = a 5'-end phospho-ribonucleoside in mRNA + diphosphate + H(+). The enzyme catalyses a 5'-end NAD(+)-phospho-ribonucleoside in mRNA + H2O = a 5'-end phospho-ribonucleoside in mRNA + NAD(+) + H(+). The catalysed reaction is a 5'-end NAD(+)-phospho-ribonucleoside in snoRNA + H2O = a 5'-end phospho-ribonucleoside in snoRNA + NAD(+) + H(+). It carries out the reaction a 5'-end (N(7)-methyl 5'-triphosphoguanosine)-ribonucleoside-ribonucleotide in mRNA + H2O = a (N(7)-methyl 5'-triphosphoguanosine)-nucleoside + a 5'-end phospho-ribonucleoside in mRNA + H(+). It catalyses the reaction a 5'-end FAD-phospho-ribonucleoside in mRNA + H2O = a 5'-end phospho-ribonucleoside in mRNA + FAD + H(+). The enzyme catalyses a 5'-end CoA-ribonucleoside in mRNA + H2O = 3'-dephospho-CoA + a 5'-end phospho-ribonucleoside in mRNA + H(+). Decapping enzyme for NAD-capped RNAs: specifically hydrolyzes the nicotinamide adenine dinucleotide (NAD) cap from a subset of RNAs by removing the entire NAD moiety from the 5'-end of an NAD-capped RNA. The NAD-cap is present at the 5'-end of some RNAs and snoRNAs. In contrast to the canonical 5'-end N7 methylguanosine (m7G) cap, the NAD cap promotes mRNA decay. Also acts as a non-canonical decapping enzyme that removes the entire cap structure of m7G capped or incompletely capped RNAs and mediates their subsequent degradation. Specifically degrades pre-mRNAs with a defective 5'-end m7G cap and is part of a pre-mRNA capping quality control. Has decapping activity toward incomplete 5'-end m7G cap mRNAs such as unmethylated 5'-end-capped RNA (cap0), while it has no activity toward 2'-O-ribose methylated m7G cap (cap1). Also has 5'-3' exoribonuclease activities: The 5'-end monophosphate RNA is then degraded by the 5'-3' exoribonuclease activity, enabling this enzyme to decap and degrade incompletely capped mRNAs. Also possesses RNA 5'-pyrophosphohydrolase activity by hydrolyzing the 5'-end triphosphate to release pyrophosphates. Exhibits decapping activity towards FAD-capped RNAs. Exhibits decapping activity towards dpCoA-capped RNAs in vitro. The chain is Decapping and exoribonuclease protein from Xenopus laevis (African clawed frog).